Consider the following 135-residue polypeptide: UPF0355 protein SE_2351 (135 aa).

The protein belongs to the UPF0355 family.

The protein is UPF0355 protein SE_2351 of Staphylococcus epidermidis (strain ATCC 12228 / FDA PCI 1200).